A 247-amino-acid polypeptide reads, in one-letter code: 5-oxoprolinase subunit A (247 aa).

It belongs to the LamB/PxpA family. As to quaternary structure, forms a complex composed of PxpA, PxpB and PxpC.

The enzyme catalyses 5-oxo-L-proline + ATP + 2 H2O = L-glutamate + ADP + phosphate + H(+). In terms of biological role, catalyzes the cleavage of 5-oxoproline to form L-glutamate coupled to the hydrolysis of ATP to ADP and inorganic phosphate. The chain is 5-oxoprolinase subunit A from Histophilus somni (strain 129Pt) (Haemophilus somnus).